The chain runs to 91 residues: UPF0250 protein BP0104 (91 aa).

The protein belongs to the UPF0250 family.

In Bordetella pertussis (strain Tohama I / ATCC BAA-589 / NCTC 13251), this protein is UPF0250 protein BP0104.